Consider the following 294-residue polypeptide: Putative pyruvate, phosphate dikinase regulatory protein (294 aa).

156–163 (GVSRSGKT) contacts ADP.

The protein belongs to the pyruvate, phosphate/water dikinase regulatory protein family. PDRP subfamily.

The catalysed reaction is N(tele)-phospho-L-histidyl/L-threonyl-[pyruvate, phosphate dikinase] + ADP = N(tele)-phospho-L-histidyl/O-phospho-L-threonyl-[pyruvate, phosphate dikinase] + AMP + H(+). It catalyses the reaction N(tele)-phospho-L-histidyl/O-phospho-L-threonyl-[pyruvate, phosphate dikinase] + phosphate + H(+) = N(tele)-phospho-L-histidyl/L-threonyl-[pyruvate, phosphate dikinase] + diphosphate. Its function is as follows. Bifunctional serine/threonine kinase and phosphorylase involved in the regulation of the pyruvate, phosphate dikinase (PPDK) by catalyzing its phosphorylation/dephosphorylation. The polypeptide is Putative pyruvate, phosphate dikinase regulatory protein (Cutibacterium acnes (strain DSM 16379 / KPA171202) (Propionibacterium acnes)).